A 66-amino-acid polypeptide reads, in one-letter code: Opicalcin-1 (66 aa).

Positions 1 to 22 (MKPSLIIVTFIVVFMAISCVAA) are cleaved as a signal peptide. Positions 23-31 (DDEQETWIE) are excised as a propeptide. 3 disulfide bridges follow: Cys36-Cys50, Cys43-Cys54, and Cys49-Cys65. The essential for stimulation of [3H]ryanodine binding to RYR1 stretch occupies residues 55-57 (KRR).

The protein belongs to the scorpion calcin family. As to expression, expressed by the venom gland.

The protein resides in the secreted. Its function is as follows. This toxin stabilizes ryanodine receptor 1 (RyR1) opening in a long-lasting subconductance state (35% of the full conductance state). Furthermore, it triggers calcium release from sarcoplasmic vesicles (2 nM are enough to induce a sharp release, and 67% of the total calcium is released after toxin (100 nM) addition) probably by acting as a cell-penetrating peptide (CPP). In addition, it has been shown to dose-dependently stimulate ryanodine binding to RyR1 (EC(50)=0.3 nM). It also augments the bell-shaped calcium-[3H]ryanodine binding curve that is maximal at about 10 uM calcium concentration. It binds a different site as ryanodine. It acts synergistically with caffeine. In vivo, intracerebroventricular injection into mice induces neurotoxic symptoms, followed by death. The sequence is that of Opicalcin-1 from Opistophthalmus carinatus (African yellow leg scorpion).